The following is a 308-amino-acid chain: uncharacterized protein (308 aa).

2 stretches are compositionally biased toward polar residues: residues 138 to 148 (WSFTKHGSNTP) and 205 to 229 (STSHLNHPSTSNSPDPLYSASQPPS). 2 disordered regions span residues 138-157 (WSFTKHGSNTPSDSSSPLCN) and 205-235 (STSHLNHPSTSNSPDPLYSASQPPSIKTDAS).

Its subcellular location is the cytoplasm. This is an uncharacterized protein from Schizosaccharomyces pombe (strain 972 / ATCC 24843) (Fission yeast).